A 430-amino-acid chain; its full sequence is Serine hydroxymethyltransferase (430 aa).

(6S)-5,6,7,8-tetrahydrofolate is bound at residue 120-122; that stretch reads GHI. Lys-226 is modified (N6-(pyridoxal phosphate)lysine).

It belongs to the SHMT family. In terms of assembly, homodimer. The cofactor is pyridoxal 5'-phosphate.

It is found in the cytoplasm. It functions in the pathway amino-acid biosynthesis; glycine biosynthesis; glycine from L-serine: step 1/1. Its function is as follows. Catalyzes the reversible interconversion of serine and glycine with a modified folate serving as the one-carbon carrier. Also exhibits a pteridine-independent aldolase activity toward beta-hydroxyamino acids, producing glycine and aldehydes, via a retro-aldol mechanism. This Pyrobaculum islandicum (strain DSM 4184 / JCM 9189 / GEO3) protein is Serine hydroxymethyltransferase.